We begin with the raw amino-acid sequence, 808 residues long: MATRGSRSEKVKRIFQQFDGNHDGGLNREEMAALVVAVNPRVKFSDEQINAILDEVFRTYAEFIDPNKGLTYDGLLRTYDDGAGDVDRDFDALGLELNADETTIKGSEAASSSSITDERAVEAQKKQRTAAWAVSPNHGIVFDETWKLVDDLEILVKRLKSKQEKDGKLKADNNNNNVDAFSDAGWSRELGPSSEISEKRIYWEESSHDYGVFVKELGVLRSKADGARSREEAFDGHMAIGRVLYEHQLFKEALVSFKRACELQPTDVRPHFKAGNCLYVLGKCKESKDEFLLALEAAESGGNQWAYLLPQIYVNLGIALEGEGMVLSACEYYREAAILCPTHFRALKLLGSALFGVGEYRAAVKALEEAIYLKPDYADAHCDLASSLHSMGEDERAIEVFQRAIDLKPGHVDALYNLGGLYMDLGRFQRASEMYTRVLTVWPNHWRAQLNKAVSLLGAGETEEAKRALKEALKLTNRVELHDAISHLKHLQKKKGKNNGNGNGGEGPFIVVEPSKFKTVGEKTTLRPDLATALQIRAFQRVTRLGKCDVEAVRKEMRDNDVPVSYSGSGGPTKSIRKPNLEEILRRLLSSLKPDTFQGAIKAINEKILALLDDSGSGRVDMGMFYAVIAPLCGGHSDKRKRVAFDALLWRPVNEGSSQITKTDAVKYIKLLRAIYIPSHGMSEMLEVHGEEEAESSVTVTFNQFLAMFDDPDWGFGIMSTILKLEANDRNRHGNQVCSVCRYPVIGSRFKEVKARFSLCNQCYGEGKVPPSFKQEEYKFREYESEAEAMKAKCVCFSMQSHKKAIAT.

One can recognise an EF-hand 1 domain in the interval 6 to 41 (SRSEKVKRIFQQFDGNHDGGLNREEMAALVVAVNPR). 7 TPR repeats span residues 234–267 (FDGH…QPTD), 269–301 (RPHF…AESG), 310–343 (PQIY…CPTH), 344–377 (FRAL…KPDY), 378–411 (ADAH…KPGH), 412–445 (VDAL…WPNH), and 447–479 (RAQL…TNRV). One can recognise an EF-hand 2 domain in the interval 600-635 (AIKAINEKILALLDDSGSGRVDMGMFYAVIAPLCGG). Positions 773 to 794 (FKQEEYKFREYESEAEAMKAKC) form a coiled coil.

This is an uncharacterized protein from Arabidopsis thaliana (Mouse-ear cress).